A 239-amino-acid polypeptide reads, in one-letter code: tRNA (guanine-N(7)-)-methyltransferase (239 aa).

Residues Glu69, Glu94, Asp121, and Asp144 each contribute to the S-adenosyl-L-methionine site. The active site involves Asp144. Lys148 serves as a coordination point for substrate. Residues 150 to 155 (RHNKRR) are interaction with RNA. Substrate contacts are provided by residues Asp180 and 217–220 (TKFE).

This sequence belongs to the class I-like SAM-binding methyltransferase superfamily. TrmB family. As to quaternary structure, monomer.

It carries out the reaction guanosine(46) in tRNA + S-adenosyl-L-methionine = N(7)-methylguanosine(46) in tRNA + S-adenosyl-L-homocysteine. It participates in tRNA modification; N(7)-methylguanine-tRNA biosynthesis. In terms of biological role, catalyzes the formation of N(7)-methylguanine at position 46 (m7G46) in tRNA. The protein is tRNA (guanine-N(7)-)-methyltransferase of Escherichia coli O6:H1 (strain CFT073 / ATCC 700928 / UPEC).